The sequence spans 128 residues: Small ribosomal subunit protein uS11 (128 aa).

The protein belongs to the universal ribosomal protein uS11 family. As to quaternary structure, part of the 30S ribosomal subunit. Interacts with proteins S7 and S18. Binds to IF-3.

Its function is as follows. Located on the platform of the 30S subunit, it bridges several disparate RNA helices of the 16S rRNA. Forms part of the Shine-Dalgarno cleft in the 70S ribosome. This is Small ribosomal subunit protein uS11 from Solidesulfovibrio magneticus (strain ATCC 700980 / DSM 13731 / RS-1) (Desulfovibrio magneticus).